The primary structure comprises 279 residues: 5'-nucleotidase SurE (279 aa).

A divalent metal cation-binding residues include aspartate 28, aspartate 29, serine 59, and asparagine 113.

It belongs to the SurE nucleotidase family. It depends on a divalent metal cation as a cofactor.

It localises to the cytoplasm. The enzyme catalyses a ribonucleoside 5'-phosphate + H2O = a ribonucleoside + phosphate. In terms of biological role, nucleotidase that shows phosphatase activity on nucleoside 5'-monophosphates. This chain is 5'-nucleotidase SurE, found in Methanospirillum hungatei JF-1 (strain ATCC 27890 / DSM 864 / NBRC 100397 / JF-1).